An 81-amino-acid polypeptide reads, in one-letter code: ATP synthase subunit c (81 aa).

The next 2 membrane-spanning stretches (helical) occupy residues 7-27 (AASVVAAGLAVGLGAIGPGLG) and 57-77 (FAFMESLTIYGLVVALVLLFA).

The protein belongs to the ATPase C chain family. In terms of assembly, F-type ATPases have 2 components, F(1) - the catalytic core - and F(0) - the membrane proton channel. F(1) has five subunits: alpha(3), beta(3), gamma(1), delta(1), epsilon(1). F(0) has four main subunits: a(1), b(1), b'(1) and c(10-14). The alpha and beta chains form an alternating ring which encloses part of the gamma chain. F(1) is attached to F(0) by a central stalk formed by the gamma and epsilon chains, while a peripheral stalk is formed by the delta, b and b' chains.

The protein localises to the cellular thylakoid membrane. Functionally, f(1)F(0) ATP synthase produces ATP from ADP in the presence of a proton or sodium gradient. F-type ATPases consist of two structural domains, F(1) containing the extramembraneous catalytic core and F(0) containing the membrane proton channel, linked together by a central stalk and a peripheral stalk. During catalysis, ATP synthesis in the catalytic domain of F(1) is coupled via a rotary mechanism of the central stalk subunits to proton translocation. Its function is as follows. Key component of the F(0) channel; it plays a direct role in translocation across the membrane. A homomeric c-ring of between 10-14 subunits forms the central stalk rotor element with the F(1) delta and epsilon subunits. This is ATP synthase subunit c from Prochlorococcus marinus (strain MIT 9301).